The sequence spans 216 residues: uncharacterized protein (216 aa).

The tract at residues Asn55 to Lys216 is disordered. Basic and acidic residues-rich tracts occupy residues Leu134 to Val152, Lys177 to His187, and Asn207 to Lys216.

This is an uncharacterized protein from Caenorhabditis elegans.